Reading from the N-terminus, the 515-residue chain is 2,3-bisphosphoglycerate-independent phosphoglycerate mutase (515 aa).

The Mn(2+) site is built by aspartate 17 and serine 67. Serine 67 acts as the Phosphoserine intermediate in catalysis. Residues histidine 128, 157-158, arginine 190, arginine 196, 262-265, and lysine 336 contribute to the substrate site; these read RD and RADR. Residues aspartate 403, histidine 407, aspartate 444, histidine 445, and histidine 463 each coordinate Mn(2+).

It belongs to the BPG-independent phosphoglycerate mutase family. Monomer. The cofactor is Mn(2+).

It catalyses the reaction (2R)-2-phosphoglycerate = (2R)-3-phosphoglycerate. The protein operates within carbohydrate degradation; glycolysis; pyruvate from D-glyceraldehyde 3-phosphate: step 3/5. In terms of biological role, catalyzes the interconversion of 2-phosphoglycerate and 3-phosphoglycerate. In Acinetobacter baylyi (strain ATCC 33305 / BD413 / ADP1), this protein is 2,3-bisphosphoglycerate-independent phosphoglycerate mutase.